Reading from the N-terminus, the 172-residue chain is Shikimate kinase (172 aa).

11 to 16 lines the ATP pocket; sequence GAGKST. S15 contacts Mg(2+). Substrate contacts are provided by D33, R57, and G79. R117 lines the ATP pocket. R136 is a binding site for substrate. R153 contacts ATP.

It belongs to the shikimate kinase family. As to quaternary structure, monomer. Mg(2+) is required as a cofactor.

It localises to the cytoplasm. The enzyme catalyses shikimate + ATP = 3-phosphoshikimate + ADP + H(+). It functions in the pathway metabolic intermediate biosynthesis; chorismate biosynthesis; chorismate from D-erythrose 4-phosphate and phosphoenolpyruvate: step 5/7. In terms of biological role, catalyzes the specific phosphorylation of the 3-hydroxyl group of shikimic acid using ATP as a cosubstrate. This Pseudomonas syringae pv. tomato (strain ATCC BAA-871 / DC3000) protein is Shikimate kinase.